Consider the following 687-residue polypeptide: DNA-directed RNA polymerase subunit beta' (687 aa).

Zn(2+) contacts are provided by C76, C78, C94, and C97. The Mg(2+) site is built by D496, D498, and D500.

The protein belongs to the RNA polymerase beta' chain family. RpoC1 subfamily. As to quaternary structure, in plastids the minimal PEP RNA polymerase catalytic core is composed of four subunits: alpha, beta, beta', and beta''. When a (nuclear-encoded) sigma factor is associated with the core the holoenzyme is formed, which can initiate transcription. It depends on Mg(2+) as a cofactor. Zn(2+) serves as cofactor.

The protein localises to the plastid. It is found in the chloroplast. The enzyme catalyses RNA(n) + a ribonucleoside 5'-triphosphate = RNA(n+1) + diphosphate. Functionally, DNA-dependent RNA polymerase catalyzes the transcription of DNA into RNA using the four ribonucleoside triphosphates as substrates. The sequence is that of DNA-directed RNA polymerase subunit beta' from Ipomoea purpurea (Common morning glory).